The chain runs to 305 residues: Putative lipid kinase SAB0675c (305 aa).

The DAGKc domain maps to 3–139; sequence NKYTHGVLFY…YDVIKINNQY (137 aa). Residues serine 44, 74 to 80, and threonine 101 contribute to the ATP site; that span reads GDGTVNE. The Mg(2+) site is built by serine 220, aspartate 223, and glutamate 225. Catalysis depends on glutamate 281, which acts as the Proton acceptor.

This sequence belongs to the diacylglycerol/lipid kinase family. Mg(2+) serves as cofactor.

May catalyze the ATP-dependent phosphorylation of lipids other than diacylglycerol (DAG). The protein is Putative lipid kinase SAB0675c of Staphylococcus aureus (strain bovine RF122 / ET3-1).